A 102-amino-acid chain; its full sequence is UPF0147 protein MTH_1407 (102 aa).

Belongs to the UPF0147 family.

This chain is UPF0147 protein MTH_1407, found in Methanothermobacter thermautotrophicus (strain ATCC 29096 / DSM 1053 / JCM 10044 / NBRC 100330 / Delta H) (Methanobacterium thermoautotrophicum).